The primary structure comprises 429 residues: Na(+)/H(+) antiporter NhaA 1 (429 aa).

12 helical membrane passes run 32–52, 73–93, 111–131, 140–160, 170–190, 193–213, 219–239, 243–263, 284–304, 316–336, 349–369, and 383–403; these read ISGGLLLAATVLALGWANSPW, LSVQQWAADGLLAIFFFVAGL, VVPVAAAAGGVAVPAVLYSLL, GWAIPTATDIAFALSVLAVVG, FLLTLAVVDDLLAIVIIAVAY, ELSVVPLVAAVVPLAAFTLLV, AWWLLLPLAVLTWALVHASGV, VAGVLLAFAVPVLRSEGAGGP, VAVPVFAFCSAGVTVGGLGGL, VVVGLVVGKAIGIFTTTWLVA, WVDVAGLALLGGVGFTVSLLI, and HVKVGVLTASVTAALLATVVL.

It belongs to the NhaA Na(+)/H(+) (TC 2.A.33) antiporter family.

The protein localises to the cell membrane. It catalyses the reaction Na(+)(in) + 2 H(+)(out) = Na(+)(out) + 2 H(+)(in). Functionally, na(+)/H(+) antiporter that extrudes sodium in exchange for external protons. The sequence is that of Na(+)/H(+) antiporter NhaA 1 from Frankia alni (strain DSM 45986 / CECT 9034 / ACN14a).